The sequence spans 313 residues: Dihydroorotate dehydrogenase (fumarate) (313 aa).

Residues A20 and 44-45 (KS) contribute to the FMN site. Substrate is bound by residues K44, 68-72 (NSMGL), and N128. Position 128 (N128) interacts with FMN. C131 acts as the Nucleophile in catalysis. N133 contributes to the substrate binding site. Residues K165 and V194 each contribute to the FMN site. A substrate-binding site is contributed by 195-196 (NS). Residues G223, C249, 249-251 (CGG), and 272-273 (GT) each bind FMN.

This sequence belongs to the dihydroorotate dehydrogenase family. Type 1 subfamily. Homodimer. FMN is required as a cofactor.

Its subcellular location is the cytoplasm. The catalysed reaction is (S)-dihydroorotate + fumarate = orotate + succinate. Its pathway is pyrimidine metabolism; UMP biosynthesis via de novo pathway. Catalyzes the conversion of dihydroorotate to orotate with fumarate as the electron acceptor. Molecular oxygen can replace fumarate in vitro. In Trypanosoma brucei brucei (strain 927/4 GUTat10.1), this protein is Dihydroorotate dehydrogenase (fumarate).